The primary structure comprises 249 residues: Isoprenyl transferase (249 aa).

D29 is an active-site residue. D29 lines the Mg(2+) pocket. Substrate contacts are provided by residues 30–33, W34, R42, H46, and 74–76; these read GNGR and STE. Residue N77 is the Proton acceptor of the active site. Substrate contacts are provided by residues W78, R80, R197, and 203–205; that span reads RLS. Residue E216 coordinates Mg(2+).

Belongs to the UPP synthase family. Homodimer. Mg(2+) is required as a cofactor.

In terms of biological role, catalyzes the condensation of isopentenyl diphosphate (IPP) with allylic pyrophosphates generating different type of terpenoids. The sequence is that of Isoprenyl transferase from Gloeobacter violaceus (strain ATCC 29082 / PCC 7421).